Consider the following 473-residue polypeptide: Siroheme synthase (473 aa).

The precorrin-2 dehydrogenase /sirohydrochlorin ferrochelatase stretch occupies residues 1-203 (MTLFPIFADL…QQPGLAEQEL (203 aa)). NAD(+)-binding positions include 22 to 23 (AV) and 43 to 44 (PR). At Ser-128 the chain carries Phosphoserine. The uroporphyrinogen-III C-methyltransferase stretch occupies residues 216–473 (GSVVLVGAGP…GLPGPQALAA (258 aa)). Pro-225 is an S-adenosyl-L-methionine binding site. The active-site Proton acceptor is Asp-248. Lys-270 serves as the catalytic Proton donor. Residues 302-304 (GGD), Ile-307, 332-333 (TA), Met-384, and Gly-413 contribute to the S-adenosyl-L-methionine site.

In the N-terminal section; belongs to the precorrin-2 dehydrogenase / sirohydrochlorin ferrochelatase family. It in the C-terminal section; belongs to the precorrin methyltransferase family.

It catalyses the reaction uroporphyrinogen III + 2 S-adenosyl-L-methionine = precorrin-2 + 2 S-adenosyl-L-homocysteine + H(+). The catalysed reaction is precorrin-2 + NAD(+) = sirohydrochlorin + NADH + 2 H(+). The enzyme catalyses siroheme + 2 H(+) = sirohydrochlorin + Fe(2+). It functions in the pathway cofactor biosynthesis; adenosylcobalamin biosynthesis; precorrin-2 from uroporphyrinogen III: step 1/1. It participates in cofactor biosynthesis; adenosylcobalamin biosynthesis; sirohydrochlorin from precorrin-2: step 1/1. The protein operates within porphyrin-containing compound metabolism; siroheme biosynthesis; precorrin-2 from uroporphyrinogen III: step 1/1. Its pathway is porphyrin-containing compound metabolism; siroheme biosynthesis; siroheme from sirohydrochlorin: step 1/1. It functions in the pathway porphyrin-containing compound metabolism; siroheme biosynthesis; sirohydrochlorin from precorrin-2: step 1/1. In terms of biological role, multifunctional enzyme that catalyzes the SAM-dependent methylations of uroporphyrinogen III at position C-2 and C-7 to form precorrin-2 via precorrin-1. Then it catalyzes the NAD-dependent ring dehydrogenation of precorrin-2 to yield sirohydrochlorin. Finally, it catalyzes the ferrochelation of sirohydrochlorin to yield siroheme. The protein is Siroheme synthase of Bordetella parapertussis (strain 12822 / ATCC BAA-587 / NCTC 13253).